Consider the following 155-residue polypeptide: Aspartate carbamoyltransferase regulatory chain (155 aa).

Residues cysteine 112, cysteine 117, cysteine 138, and cysteine 141 each coordinate Zn(2+).

It belongs to the PyrI family. As to quaternary structure, contains catalytic and regulatory chains. Requires Zn(2+) as cofactor.

Involved in allosteric regulation of aspartate carbamoyltransferase. The protein is Aspartate carbamoyltransferase regulatory chain of Methanocorpusculum labreanum (strain ATCC 43576 / DSM 4855 / Z).